The primary structure comprises 307 residues: N-acetylmuramic acid 6-phosphate etherase (307 aa).

Residues 59–222 (TTKALSQGGK…STGVMVRLGK (164 aa)) form the SIS domain. E87 serves as the catalytic Proton donor. The active site involves E118.

Belongs to the GCKR-like family. MurNAc-6-P etherase subfamily. In terms of assembly, homodimer.

It catalyses the reaction N-acetyl-D-muramate 6-phosphate + H2O = N-acetyl-D-glucosamine 6-phosphate + (R)-lactate. It functions in the pathway amino-sugar metabolism; N-acetylmuramate degradation. Specifically catalyzes the cleavage of the D-lactyl ether substituent of MurNAc 6-phosphate, producing GlcNAc 6-phosphate and D-lactate. This chain is N-acetylmuramic acid 6-phosphate etherase, found in Trichodesmium erythraeum (strain IMS101).